The primary structure comprises 326 residues: GMP reductase (326 aa).

The active-site Thioimidate intermediate is the Cys-175. Ile-204–Val-227 provides a ligand contact to NADP(+).

Belongs to the IMPDH/GMPR family. GuaC type 2 subfamily.

It carries out the reaction IMP + NH4(+) + NADP(+) = GMP + NADPH + 2 H(+). Catalyzes the irreversible NADPH-dependent deamination of GMP to IMP. It functions in the conversion of nucleobase, nucleoside and nucleotide derivatives of G to A nucleotides, and in maintaining the intracellular balance of A and G nucleotides. In Bacillus licheniformis (strain ATCC 14580 / DSM 13 / JCM 2505 / CCUG 7422 / NBRC 12200 / NCIMB 9375 / NCTC 10341 / NRRL NRS-1264 / Gibson 46), this protein is GMP reductase.